Reading from the N-terminus, the 324-residue chain is ATP-dependent 6-phosphofructokinase (324 aa).

G11 serves as a coordination point for ATP. 21 to 25 (RAVVR) contributes to the ADP binding site. ATP is bound by residues 72-73 (RE) and 102-105 (GNGS). Residue N103 coordinates Mg(2+). 126–128 (TID) is a binding site for substrate. D128 serves as the catalytic Proton acceptor. Residue K155 coordinates ADP. Residues R163 and 170-172 (MGR) each bind substrate. Residues 186 to 188 (GAE) and 214 to 216 (KNF) each bind ADP. Substrate contacts are provided by residues E223, R248, and 254–257 (YIQR).

It belongs to the phosphofructokinase type A (PFKA) family. ATP-dependent PFK group I subfamily. Prokaryotic clade 'B1' sub-subfamily. As to quaternary structure, homotetramer. The cofactor is Mg(2+).

It is found in the cytoplasm. The enzyme catalyses beta-D-fructose 6-phosphate + ATP = beta-D-fructose 1,6-bisphosphate + ADP + H(+). It participates in carbohydrate degradation; glycolysis; D-glyceraldehyde 3-phosphate and glycerone phosphate from D-glucose: step 3/4. Allosterically activated by ADP and other diphosphonucleosides, and allosterically inhibited by phosphoenolpyruvate. In terms of biological role, catalyzes the phosphorylation of D-fructose 6-phosphate to fructose 1,6-bisphosphate by ATP, the first committing step of glycolysis. This chain is ATP-dependent 6-phosphofructokinase, found in Sulfurihydrogenibium sp. (strain YO3AOP1).